A 216-amino-acid polypeptide reads, in one-letter code: Protein YabP (216 aa).

The chain is Protein YabP (yabP) from Escherichia coli (strain K12).